The primary structure comprises 160 residues: Eosinophil cationic protein (160 aa).

The first 27 residues, 1-27, serve as a signal peptide directing secretion; that stretch reads MVPKLFTSQICLLLLLGLMGVEGSLHA. The tract at residues 28–72 is required for nearly all of the bactericidal activities; partially involved in LPS-binding; that stretch reads RPPQFTRAQWFAIQHISLNPPRCTIAMRVINNYRWRCKNQNTFLR. H42 acts as the Proton acceptor in catalysis. 4 cysteine pairs are disulfide-bonded: C50–C110, C64–C123, C82–C138, and C89–C98. 3'-nitrotyrosine is present on Y60. 65 to 69 is a binding site for substrate; sequence KNQNT. 3 N-linked (GlcNAc...) asparagine glycosylation sites follow: N84, N92, and N119. H155 (proton donor) is an active-site residue.

Belongs to the pancreatic ribonuclease family. In terms of assembly, interacts with bacterial lipopolysaccharide (LPS) and lipoteichoic acid (LTA). In vitro interacts with phospholipid bilayers.

It is found in the secreted. Functionally, cytotoxin and helminthotoxin with low-efficiency ribonuclease activity. Possesses a wide variety of biological activities. Exhibits antibacterial activity. The polypeptide is Eosinophil cationic protein (RNASE3) (Gorilla gorilla gorilla (Western lowland gorilla)).